The sequence spans 265 residues: NAD kinase 1 (265 aa).

Asp45 serves as the catalytic Proton acceptor. Residues 45–46 (DG), 122–123 (NE), Arg148, Asp150, and Ala185 each bind NAD(+).

Belongs to the NAD kinase family. It depends on a divalent metal cation as a cofactor.

Its subcellular location is the cytoplasm. It carries out the reaction NAD(+) + ATP = ADP + NADP(+) + H(+). In terms of biological role, involved in the regulation of the intracellular balance of NAD and NADP, and is a key enzyme in the biosynthesis of NADP. Catalyzes specifically the phosphorylation on 2'-hydroxyl of the adenosine moiety of NAD to yield NADP. The sequence is that of NAD kinase 1 from Bacillus anthracis.